Consider the following 239-residue polypeptide: THAP domain-containing protein 3 (239 aa).

Residues 1–82 (MPKSCAARQC…LKHNAVPTVF (82 aa)) form a THAP-type zinc finger. Disordered regions lie at residues 88–125 (PQLVRENTDPTGRSGDATSGERKVLPETGSGECGLGRK) and 139–174 (VGGLGAQVPPHTPETSGVPGQPASPPELKRRLPTQP). Residues 176–179 (DHSY) carry the HCFC1-binding motif (HBM) motif.

As to quaternary structure, component of a THAP1/THAP3-HCFC1-OGT complex that contains at least, either THAP1 or THAP3, HCFC1 and OGT. Interacts directly with OGT and HCFC1 (via its HBM).

Functionally, component of a THAP1/THAP3-HCFC1-OGT complex that is required for the regulation of the transcriptional activity of RRM1. This is THAP domain-containing protein 3 (THAP3) from Bos taurus (Bovine).